Here is a 100-residue protein sequence, read N- to C-terminus: Urease subunit gamma (100 aa).

This sequence belongs to the urease gamma subunit family. In terms of assembly, heterotrimer of UreA (gamma), UreB (beta) and UreC (alpha) subunits. Three heterotrimers associate to form the active enzyme.

It localises to the cytoplasm. The catalysed reaction is urea + 2 H2O + H(+) = hydrogencarbonate + 2 NH4(+). It functions in the pathway nitrogen metabolism; urea degradation; CO(2) and NH(3) from urea (urease route): step 1/1. The sequence is that of Urease subunit gamma from Burkholderia multivorans (strain ATCC 17616 / 249).